Consider the following 390-residue polypeptide: MRTLLDLDPKGKRVLVRVDYNVPVQDGKVQDETRILESLPTLRHLLAGGASLVLLSHLGRPKGPDPRYSLAPVGEALRAHLPEARFAPFPPGSEEARREAEALRPGEVLLLENVRFEPGEEKNDPELSARYARLGEAFVLDAFGSAHRAHASVVGVARLLPAYAGFLMEKEVRALSRLLKDPERPYAVVLGGAKVSDKIGVIESLLPRIDRLLIGGAMAFTFLKALGGEVGKSLVEEDRLDLAKDLLGRAEALGVRVYLPEDVVAAERIEAGVETRVFPARAIPVPYMGLDIGPKTREAFARALEGARTVFWNGPMGVFEVPPFDEGTLAVGRAIAALEGAFTVVGGGDSVAAVNRLGLKDRFGHVSTGGGASLEFLEKGTLPGLEVLEG.

Residues 19–21 (DYN), Arg-34, 57–60 (HLGR), Arg-115, and Arg-148 each bind substrate. Residues Lys-198, Gly-289, Glu-320, and 347 to 350 (GGDS) contribute to the ATP site.

It belongs to the phosphoglycerate kinase family. As to quaternary structure, monomer.

It is found in the cytoplasm. It catalyses the reaction (2R)-3-phosphoglycerate + ATP = (2R)-3-phospho-glyceroyl phosphate + ADP. It functions in the pathway carbohydrate degradation; glycolysis; pyruvate from D-glyceraldehyde 3-phosphate: step 2/5. The chain is Phosphoglycerate kinase from Thermus thermophilus (strain ATCC BAA-163 / DSM 7039 / HB27).